An 82-amino-acid chain; its full sequence is Protein RALF-like 8 (82 aa).

The N-terminal stretch at 1 to 28 is a signal peptide; sequence MGMSKSIKVILSLALVVFLALAGTKVEA. Cystine bridges form between cysteine 47–cysteine 55 and cysteine 67–cysteine 73.

This sequence belongs to the plant rapid alkalinization factor (RALF) family. In terms of tissue distribution, expressed in leaves and flowers.

It localises to the secreted. Cell signaling peptide that may regulate plant stress, growth, and development. Mediates a rapid alkalinization of extracellular space by mediating a transient increase in the cytoplasmic Ca(2+) concentration leading to a calcium-dependent signaling events through a cell surface receptor and a concomitant activation of some intracellular mitogen-activated protein kinases. The sequence is that of Protein RALF-like 8 (RALFL8) from Arabidopsis thaliana (Mouse-ear cress).